We begin with the raw amino-acid sequence, 175 residues long: Nucleoside triphosphate/diphosphate phosphatase (175 aa).

Arginine 23 (proton donor) is an active-site residue. Asparagine 87, aspartate 103, aspartate 105, aspartate 107, aspartate 120, and glutamate 123 together coordinate Mg(2+).

The protein belongs to the Ntdp family. Mg(2+) is required as a cofactor.

The catalysed reaction is a ribonucleoside 5'-triphosphate + H2O = a ribonucleoside 5'-diphosphate + phosphate + H(+). It catalyses the reaction a ribonucleoside 5'-diphosphate + H2O = a ribonucleoside 5'-phosphate + phosphate + H(+). Its function is as follows. Has nucleoside phosphatase activity towards nucleoside triphosphates and nucleoside diphosphates. The chain is Nucleoside triphosphate/diphosphate phosphatase from Halalkalibacterium halodurans (strain ATCC BAA-125 / DSM 18197 / FERM 7344 / JCM 9153 / C-125) (Bacillus halodurans).